The chain runs to 36 residues: Protein usd (36 aa).

Required for translation of SpoIIID. The polypeptide is Protein usd (usd) (Bacillus subtilis (strain 168)).